Here is a 630-residue protein sequence, read N- to C-terminus: Sodium-dependent serotonin transporter (630 aa).

The Cytoplasmic portion of the chain corresponds to 1-87 (METTALNSQK…ERETWGKKVD (87 aa)). Tyr-47 is subject to Phosphotyrosine. A helical membrane pass occupies residues 88 to 112 (FLLSVIGYAVDLGNIWRFPYVCYQN). Positions 94, 96, 97, 98, and 101 each coordinate Na(+). Position 98 (Asp-98) interacts with serotonin. Topologically, residues 113–115 (GGG) are extracellular. Residues 116–135 (AFLLPYIIMAIFGGIPLFYM) traverse the membrane as a helical segment. At 136–160 (ELALGQYHRNGCISIWRKICPIFKG) the chain is on the cytoplasmic side. Phosphotyrosine is present on Tyr-142. Residues 161-186 (IGYTICIIAFYIASYYNTIIAWALYY) form a helical membrane-spanning segment. Topologically, residues 187 to 252 (LISSFTDRLP…KGLQDVGGVS (66 aa)) are extracellular. Cys-200 and Cys-209 are oxidised to a cystine. N-linked (GlcNAc...) asparagine glycosylation is found at Asn-208 and Asn-217. Residues 253-271 (WQLTLCIMLIFTIIYFSIW) form a helical membrane-spanning segment. Over 272 to 277 (KGVKTS) the chain is Cytoplasmic. Thr-276 is subject to Phosphothreonine. A helical membrane pass occupies residues 278–297 (GKVVWVTATFPYIVLSVLLV). Over 298-324 (RGATLPGAWKGVLFYLKPNWQKLLETG) the chain is Extracellular. The chain crosses the membrane as a helical span at residues 325–347 (VWIDAAAQIFFSLGPGFGVLLAF). Ser-336 lines the Na(+) pocket. Over 348–360 (ASYNKFNNNCYQD) the chain is Cytoplasmic. Residues 361–380 (ALVTSAVNCMTSFVSGFVIF) traverse the membrane as a helical segment. Asn-368 is a binding site for Na(+). Topologically, residues 381–421 (TVLGYMAEMRSEDVSEVAKDAGPSLLFITYAEAIANMPAST) are extracellular. The chain crosses the membrane as a helical span at residues 422-443 (FFAIIFFLMLITLGLDSTFAGL). Na(+) is bound by residues Leu-434, Asp-437, and Ser-438. Thr-439 contributes to the serotonin binding site. At 444–463 (EGVITAVLDEFPHIWAKHRE) the chain is on the cytoplasmic side. Residues 464–483 (WFVLAVVITCFFGSLTTLTF) traverse the membrane as a helical segment. The Extracellular portion of the chain corresponds to 484–494 (GGAYVVKLLEE). The serotonin site is built by Glu-494 and Tyr-495. A helical membrane pass occupies residues 495–516 (YATGPAVLTVVFIEAIAVSWFY). The Cytoplasmic segment spans residues 517–538 (GVTQFCSDVKEMLGFSPGWFWR). A helical membrane pass occupies residues 539-558 (ICWVAVSPVFLLFIICSFLM). The serotonin site is built by Phe-556 and Ser-559. The Extracellular portion of the chain corresponds to 559 to 574 (SPPQLRLFQYSYPHWS). The chain crosses the membrane as a helical span at residues 575–595 (VILGYCIGTSSVICIPTYITY). The Cytoplasmic segment spans residues 596 to 630 (RLVTTPGTLKERIIKSITPETPTEIPCGDICLNAV). An interaction with RAB4A region spans residues 616–624 (TPTEIPCGD).

The protein belongs to the sodium:neurotransmitter symporter (SNF) (TC 2.A.22) family. SLC6A4 subfamily. Monomer or homooligomer. Interacts (via C-terminus) with SCAMP2; the interaction is direct and retains transporter molecules intracellularly. Interacts with filamentous actin and STX1A. Interacts (via the N-terminus) with STX1A (via the H3 domain); this interaction regulates SLC4A6 channel conductance. Interacts with SEC23A, SEC24C and PATJ. Interacts with NOS1; the interaction may diminish the cell surface localization of SERT in the brain and, correspondingly, reduce serotonin reuptake. Interacts with TGFB1I1. Interacts with ITGAV:ITGB3. Interacts (via C-terminus) with ITGB3; this interaction regulates SLC6A4 trafficking. In terms of processing, phosphorylation at Thr-276 increases 5-HT uptake and is required for cGMP-mediated SERT regulation. As to expression, expressed in the intestinal crypt epithelial cells (at protein level).

The protein localises to the cell membrane. Its subcellular location is the endomembrane system. It localises to the endosome membrane. The protein resides in the synapse. It is found in the cell junction. The protein localises to the focal adhesion. Its subcellular location is the cell projection. It localises to the neuron projection. It catalyses the reaction serotonin(out) + K(+)(in) + Na(+)(out) + H(+)(in) = serotonin(in) + K(+)(out) + Na(+)(in) + H(+)(out). Serotonin transporter that cotransports serotonin with one Na(+) ion in exchange for one K(+) ion and possibly one proton in an overall electroneutral transport cycle. Transports serotonin across the plasma membrane from the extracellular compartment to the cytosol thus limiting serotonin intercellular signaling. Essential for serotonin homeostasis in the central nervous system. In the developing somatosensory cortex, acts in glutamatergic neurons to control serotonin uptake and its trophic functions accounting for proper spatial organization of cortical neurons and elaboration of sensory circuits. In the mature cortex, acts primarily in brainstem raphe neurons to mediate serotonin uptake from the synaptic cleft back into the pre-synaptic terminal thus terminating serotonin signaling at the synapse. Modulates mucosal serotonin levels in the gastrointestinal tract through uptake and clearance of serotonin in enterocytes. Required for enteric neurogenesis and gastrointestinal reflexes. Regulates blood serotonin levels by ensuring rapid high affinity uptake of serotonin from plasma to platelets, where it is further stored in dense granules via vesicular monoamine transporters and then released upon stimulation. Mechanistically, the transport cycle starts with an outward-open conformation having Na1(+) and Cl(-) sites occupied. The binding of a second extracellular Na2(+) ion and serotonin substrate leads to structural changes to outward-occluded to inward-occluded to inward-open, where the Na2(+) ion and serotonin are released into the cytosol. Binding of intracellular K(+) ion induces conformational transitions to inward-occluded to outward-open and completes the cycle by releasing K(+) possibly together with a proton bound to Asp-98 into the extracellular compartment. Na1(+) and Cl(-) ions remain bound throughout the transport cycle. Additionally, displays serotonin-induced channel-like conductance for monovalent cations, mainly Na(+) ions. The channel activity is uncoupled from the transport cycle and may contribute to the membrane resting potential or excitability. This is Sodium-dependent serotonin transporter (SLC6A4) from Cavia porcellus (Guinea pig).